The primary structure comprises 142 residues: Thioredoxin-like protein 4A (142 aa).

Cys38 and Cys79 form a disulfide bridge. Position 132 is a phosphoserine (Ser132).

This sequence belongs to the DIM1 family. In terms of assembly, component of the precatalytic spliceosome (spliceosome B complex). Component of the U5 snRNP complex. Component of the U4/U6-U5 tri-snRNP complex. The U4/U6-U5 tri-snRNP complex is a building block of the precatalytic spliceosome (spliceosome B complex). The U4/U6-U5 tri-snRNP complex is composed of the U4, U6 and U5 snRNAs and at least PRPF3, PRPF4, PRPF6, PRPF8, PRPF31, SNRNP200, TXNL4A, SNRNP40, SNRPB, SNRPD1, SNRPD2, SNRPD3, SNRPE, SNRPF, SNRPG, DDX23, CD2BP2, PPIH, SNU13, EFTUD2, SART1 and USP39, plus LSM2, LSM3, LSM4, LSM5, LSM6, LSM7 and LSM8. Directly interacts with CD2BP2. Interacts with HNRPF, HNRPH2, NEDD9 and PQBP1. Interacts with ERBB4. Post-translationally, the disulfide bond seen in structures determined by X-ray crystallography and NMR is not essential for protein folding and function.

Its subcellular location is the nucleus. Functionally, plays a role in pre-mRNA splicing as component of the U5 snRNP and U4/U6-U5 tri-snRNP complexes that are involved in spliceosome assembly, and as component of the precatalytic spliceosome (spliceosome B complex). This Homo sapiens (Human) protein is Thioredoxin-like protein 4A (TXNL4A).